Consider the following 570-residue polypeptide: Proline--tRNA ligase (570 aa).

It belongs to the class-II aminoacyl-tRNA synthetase family. ProS type 1 subfamily. As to quaternary structure, homodimer.

It is found in the cytoplasm. It carries out the reaction tRNA(Pro) + L-proline + ATP = L-prolyl-tRNA(Pro) + AMP + diphosphate. Its function is as follows. Catalyzes the attachment of proline to tRNA(Pro) in a two-step reaction: proline is first activated by ATP to form Pro-AMP and then transferred to the acceptor end of tRNA(Pro). As ProRS can inadvertently accommodate and process non-cognate amino acids such as alanine and cysteine, to avoid such errors it has two additional distinct editing activities against alanine. One activity is designated as 'pretransfer' editing and involves the tRNA(Pro)-independent hydrolysis of activated Ala-AMP. The other activity is designated 'posttransfer' editing and involves deacylation of mischarged Ala-tRNA(Pro). The misacylated Cys-tRNA(Pro) is not edited by ProRS. This is Proline--tRNA ligase from Clostridium tetani (strain Massachusetts / E88).